We begin with the raw amino-acid sequence, 625 residues long: DNA mismatch repair protein MutL (625 aa).

The protein belongs to the DNA mismatch repair MutL/HexB family.

Its function is as follows. This protein is involved in the repair of mismatches in DNA. It is required for dam-dependent methyl-directed DNA mismatch repair. May act as a 'molecular matchmaker', a protein that promotes the formation of a stable complex between two or more DNA-binding proteins in an ATP-dependent manner without itself being part of a final effector complex. This is DNA mismatch repair protein MutL from Bacteroides fragilis (strain YCH46).